Here is a 192-residue protein sequence, read N- to C-terminus: Small ribosomal subunit protein bS16 (192 aa).

Positions 153–192 (AEAKAKAEAEAAAAAEEAAETEETPVEAAAEEAPAAESAE) are disordered. Residues 178–192 (VEAAAEEAPAAESAE) are compositionally biased toward low complexity.

It belongs to the bacterial ribosomal protein bS16 family.

This Porphyromonas gingivalis (strain ATCC BAA-308 / W83) protein is Small ribosomal subunit protein bS16.